Reading from the N-terminus, the 248-residue chain is UDP-2,3-diacylglucosamine hydrolase (248 aa).

Asp7, His9, Asp40, Asn78, and His113 together coordinate Mn(2+). Residue 78–79 (NR) coordinates substrate. Substrate contacts are provided by Asp121, Ser159, Thr163, Lys166, and His194. Positions 194 and 196 each coordinate Mn(2+).

This sequence belongs to the LpxH family. The cofactor is Mn(2+).

It localises to the cell inner membrane. The catalysed reaction is UDP-2-N,3-O-bis[(3R)-3-hydroxytetradecanoyl]-alpha-D-glucosamine + H2O = 2-N,3-O-bis[(3R)-3-hydroxytetradecanoyl]-alpha-D-glucosaminyl 1-phosphate + UMP + 2 H(+). It functions in the pathway glycolipid biosynthesis; lipid IV(A) biosynthesis; lipid IV(A) from (3R)-3-hydroxytetradecanoyl-[acyl-carrier-protein] and UDP-N-acetyl-alpha-D-glucosamine: step 4/6. Functionally, hydrolyzes the pyrophosphate bond of UDP-2,3-diacylglucosamine to yield 2,3-diacylglucosamine 1-phosphate (lipid X) and UMP by catalyzing the attack of water at the alpha-P atom. Involved in the biosynthesis of lipid A, a phosphorylated glycolipid that anchors the lipopolysaccharide to the outer membrane of the cell. The polypeptide is UDP-2,3-diacylglucosamine hydrolase (Pseudomonas syringae pv. syringae (strain B728a)).